The primary structure comprises 154 residues: Low molecular weight protein-tyrosine-phosphatase PtpA (154 aa).

Catalysis depends on C8, which acts as the Nucleophile. Residue R14 is part of the active site. Residue D120 is the Proton donor of the active site.

This sequence belongs to the low molecular weight phosphotyrosine protein phosphatase family.

It carries out the reaction O-phospho-L-tyrosyl-[protein] + H2O = L-tyrosyl-[protein] + phosphate. Dephosphorylates the phosphotyrosine-containing proteins. This Staphylococcus haemolyticus (strain JCSC1435) protein is Low molecular weight protein-tyrosine-phosphatase PtpA (ptpA).